The sequence spans 394 residues: Dual-specificity RNA methyltransferase RlmN (394 aa).

Glu115 functions as the Proton acceptor in the catalytic mechanism. The region spanning 121–363 (DEGRGTLCVS…SPIRTPRGED (243 aa)) is the Radical SAM core domain. The cysteines at positions 128 and 368 are disulfide-linked. [4Fe-4S] cluster is bound by residues Cys135, Cys139, and Cys142. Residues 194–195 (GE), Ser226, 248–250 (SFH), and Asn325 each bind S-adenosyl-L-methionine. The S-methylcysteine intermediate role is filled by Cys368.

Belongs to the radical SAM superfamily. RlmN family. [4Fe-4S] cluster serves as cofactor.

The protein localises to the cytoplasm. The enzyme catalyses adenosine(2503) in 23S rRNA + 2 reduced [2Fe-2S]-[ferredoxin] + 2 S-adenosyl-L-methionine = 2-methyladenosine(2503) in 23S rRNA + 5'-deoxyadenosine + L-methionine + 2 oxidized [2Fe-2S]-[ferredoxin] + S-adenosyl-L-homocysteine. It carries out the reaction adenosine(37) in tRNA + 2 reduced [2Fe-2S]-[ferredoxin] + 2 S-adenosyl-L-methionine = 2-methyladenosine(37) in tRNA + 5'-deoxyadenosine + L-methionine + 2 oxidized [2Fe-2S]-[ferredoxin] + S-adenosyl-L-homocysteine. Its function is as follows. Specifically methylates position 2 of adenine 2503 in 23S rRNA and position 2 of adenine 37 in tRNAs. m2A2503 modification seems to play a crucial role in the proofreading step occurring at the peptidyl transferase center and thus would serve to optimize ribosomal fidelity. In Roseobacter denitrificans (strain ATCC 33942 / OCh 114) (Erythrobacter sp. (strain OCh 114)), this protein is Dual-specificity RNA methyltransferase RlmN.